A 164-amino-acid chain; its full sequence is Two-component response regulator ARR16 (164 aa).

The region spanning 30-160 is the Response regulatory domain; it reads HVLAVDDNLI…DVEKLKCHLM (131 aa). D93 carries the post-translational modification 4-aspartylphosphate.

The protein belongs to the ARR family. Type-A subfamily. Two-component system major event consists of a His-to-Asp phosphorelay between a sensor histidine kinase (HK) and a response regulator (RR). In plants, the His-to-Asp phosphorelay involves an additional intermediate named Histidine-containing phosphotransfer protein (HPt). This multistep phosphorelay consists of a His-Asp-His-Asp sequential transfer of a phosphate group between first a His and an Asp of the HK protein, followed by the transfer to a conserved His of the HPt protein and finally the transfer to an Asp in the receiver domain of the RR protein.

The protein resides in the nucleus. Functionally, functions as a response regulator involved in His-to-Asp phosphorelay signal transduction system. Phosphorylation of the Asp residue in the receiver domain activates the ability of the protein to promote the transcription of target genes. Type-A response regulators seem to act as negative regulators of the cytokinin signaling. The sequence is that of Two-component response regulator ARR16 (ARR16) from Arabidopsis thaliana (Mouse-ear cress).